A 337-amino-acid chain; its full sequence is F-box protein At2g27310 (337 aa).

In terms of domain architecture, F-box spans 10–58 (DSISTLHSDIIQTQILTRLDGPTLASTATTSSYLQTLCTEEKLWQELSI).

The protein is F-box protein At2g27310 of Arabidopsis thaliana (Mouse-ear cress).